Reading from the N-terminus, the 98-residue chain is Small ribosomal subunit protein uS17 (98 aa).

Residues 1–21 (MADQKGPKYTPAAEKPRGRRK) form a disordered region. Lys96 is covalently cross-linked (Isoglutamyl lysine isopeptide (Lys-Gln) (interchain with Q-Cter in protein Pup)).

The protein belongs to the universal ribosomal protein uS17 family. Part of the 30S ribosomal subunit.

One of the primary rRNA binding proteins, it binds specifically to the 5'-end of 16S ribosomal RNA. This Mycolicibacterium smegmatis (strain ATCC 700084 / mc(2)155) (Mycobacterium smegmatis) protein is Small ribosomal subunit protein uS17 (rpsQ).